Here is a 943-residue protein sequence, read N- to C-terminus: Serine/threonine-protein kinase ATG1 (943 aa).

Positions 22 to 327 (FVIDKEIGKG…FEDFFHHPVI (306 aa)) constitute a Protein kinase domain. Residues 28–36 (IGKGSFAQV) and K51 each bind ATP. The Proton acceptor role is filled by D165. Disordered stretches follow at residues 334–468 (LVED…LTDE), 503–561 (QQGQ…SPGA), 774–800 (LPEE…GGQA), 858–888 (HLPK…SDDK), and 914–943 (AASK…SVPT). Basic and acidic residues predominate over residues 338–352 (DIPKPEKPVLAETKS). Polar residues predominate over residues 517–529 (ATQQGHPTSTTGA). A compositionally biased stretch (basic and acidic residues) spans 542 to 554 (RNDHYRKASHDKT). Positions 919 to 928 (QQQQQQQQVV) are enriched in low complexity.

This sequence belongs to the protein kinase superfamily. Ser/Thr protein kinase family. APG1/unc-51/ULK1 subfamily. In terms of assembly, homodimer. Forms a ternary complex with ATG13 and ATG17.

Its subcellular location is the cytoplasm. The protein resides in the preautophagosomal structure membrane. It carries out the reaction L-seryl-[protein] + ATP = O-phospho-L-seryl-[protein] + ADP + H(+). It catalyses the reaction L-threonyl-[protein] + ATP = O-phospho-L-threonyl-[protein] + ADP + H(+). Functionally, serine/threonine protein kinase involved in the cytoplasm to vacuole transport (Cvt) and found to be essential in autophagy, where it is required for the formation of autophagosomes. Involved in the clearance of protein aggregates which cannot be efficiently cleared by the proteasome. Required for selective autophagic degradation of the nucleus (nucleophagy) as well as for mitophagy which contributes to regulate mitochondrial quantity and quality by eliminating the mitochondria to a basal level to fulfill cellular energy requirements and preventing excess ROS production. Also involved in endoplasmic reticulum-specific autophagic process, in selective removal of ER-associated degradation (ERAD) substrates. Plays a key role in ATG9 and ATG23 cycling through the pre-autophagosomal structure and is necessary to promote ATG18 binding to ATG9 through phosphorylation of ATG9. Catalyzes phosphorylation of ATG4, decreasing the interaction between ATG4 and ATG8 and impairing deconjugation of PE-conjugated forms of ATG8. In Chaetomium globosum (strain ATCC 6205 / CBS 148.51 / DSM 1962 / NBRC 6347 / NRRL 1970) (Soil fungus), this protein is Serine/threonine-protein kinase ATG1.